The sequence spans 231 residues: 2-C-methyl-D-erythritol 4-phosphate cytidylyltransferase (231 aa).

It belongs to the IspD/TarI cytidylyltransferase family. IspD subfamily.

The catalysed reaction is 2-C-methyl-D-erythritol 4-phosphate + CTP + H(+) = 4-CDP-2-C-methyl-D-erythritol + diphosphate. It participates in isoprenoid biosynthesis; isopentenyl diphosphate biosynthesis via DXP pathway; isopentenyl diphosphate from 1-deoxy-D-xylulose 5-phosphate: step 2/6. Its function is as follows. Catalyzes the formation of 4-diphosphocytidyl-2-C-methyl-D-erythritol from CTP and 2-C-methyl-D-erythritol 4-phosphate (MEP). The protein is 2-C-methyl-D-erythritol 4-phosphate cytidylyltransferase of Fusobacterium nucleatum subsp. nucleatum (strain ATCC 25586 / DSM 15643 / BCRC 10681 / CIP 101130 / JCM 8532 / KCTC 2640 / LMG 13131 / VPI 4355).